Reading from the N-terminus, the 219-residue chain is Large ribosomal subunit protein uL3 (219 aa).

The interval 113–142 is disordered; that stretch reads TTKGHGYQGNIHKDNQSRGPMAHGSRYHRR.

It belongs to the universal ribosomal protein uL3 family. As to quaternary structure, part of the 50S ribosomal subunit. Forms a cluster with proteins L14 and L19.

One of the primary rRNA binding proteins, it binds directly near the 3'-end of the 23S rRNA, where it nucleates assembly of the 50S subunit. The protein is Large ribosomal subunit protein uL3 of Limosilactobacillus reuteri (strain DSM 20016) (Lactobacillus reuteri).